Consider the following 366-residue polypeptide: Ribosomal RNA large subunit methyltransferase M (366 aa).

Residues Ser188, 221-224, Asp240, Asp260, and Asp277 contribute to the S-adenosyl-L-methionine site; that span reads CPGG. The active-site Proton acceptor is Lys306.

It belongs to the class I-like SAM-binding methyltransferase superfamily. RNA methyltransferase RlmE family. RlmM subfamily. Monomer.

The protein localises to the cytoplasm. It catalyses the reaction cytidine(2498) in 23S rRNA + S-adenosyl-L-methionine = 2'-O-methylcytidine(2498) in 23S rRNA + S-adenosyl-L-homocysteine + H(+). Functionally, catalyzes the 2'-O-methylation at nucleotide C2498 in 23S rRNA. The polypeptide is Ribosomal RNA large subunit methyltransferase M (Photorhabdus asymbiotica subsp. asymbiotica (strain ATCC 43949 / 3105-77) (Xenorhabdus luminescens (strain 2))).